Consider the following 408-residue polypeptide: Multidrug resistance protein MdtG (408 aa).

A run of 11 helical transmembrane segments spans residues 16–36, 58–78, 92–112, 115–135, 146–166, 173–193, 224–244, 253–273, 290–310, 319–339, and 378–398; these read LIVAWLGCFLTGAAFSLVMPF, IVFSITFLFSAIASPFWGGLA, LGMGIVMILMGMAQNIWQFLI, ALLGLLGGFVPNANALIATQV, TLSTGGVSGALLGPLAGGLLA, PVFFITASVLMLCFVVTLLCI, LFVTTMIIQIASGSIAPILTL, VGNIAFISGMIASVPGVAALL, ILIAALIFSVLLLIPMSFVQT, FLLGAADGALLPAVQTLLVYN, and AVFLVTACVVLFNIIYSWNSL.

This sequence belongs to the major facilitator superfamily. DHA1 family. MdtG (TC 2.A.1.2.20) subfamily.

Its subcellular location is the cell inner membrane. Its function is as follows. Confers resistance to fosfomycin and deoxycholate. This is Multidrug resistance protein MdtG from Escherichia fergusonii (strain ATCC 35469 / DSM 13698 / CCUG 18766 / IAM 14443 / JCM 21226 / LMG 7866 / NBRC 102419 / NCTC 12128 / CDC 0568-73).